A 140-amino-acid chain; its full sequence is NADPH-dependent 7-cyano-7-deazaguanine reductase (140 aa).

The active-site Thioimide intermediate is Cys49. Asp56 (proton donor) is an active-site residue. Substrate is bound by residues Ile71–Leu73 and His90–Glu91.

Belongs to the GTP cyclohydrolase I family. QueF type 1 subfamily.

Its subcellular location is the cytoplasm. The enzyme catalyses 7-aminomethyl-7-carbaguanine + 2 NADP(+) = 7-cyano-7-deazaguanine + 2 NADPH + 3 H(+). The protein operates within tRNA modification; tRNA-queuosine biosynthesis. Functionally, catalyzes the NADPH-dependent reduction of 7-cyano-7-deazaguanine (preQ0) to 7-aminomethyl-7-deazaguanine (preQ1). The sequence is that of NADPH-dependent 7-cyano-7-deazaguanine reductase from Prochlorococcus marinus (strain NATL2A).